Reading from the N-terminus, the 340-residue chain is Solute-binding protein Dde_0634 (340 aa).

Residues 1–29 form the signal peptide; that stretch reads MKSTFAALLIMVGCLVSGALLTGSEAAAA. (indol-3-yl)acetate-binding positions include Tyr99, Arg172, 210–213, and Tyr235; that span reads TSLD.

The protein belongs to the bacterial solute-binding protein 7 family. As to quaternary structure, the complex is comprised of an extracytoplasmic solute-binding protein and a heteromeric permease formed by two transmembrane proteins.

Its subcellular location is the periplasm. Functionally, solute-binding protein that binds indole-3-pyruvate and indole-3-acetate (in vitro). Can also bind D-tryptophan (in vitro), but that is probably not a physiological ligand. Probably part of a tripartite ATP-independent periplasmic (TRAP) transport system that mediates solute transport into the cytoplasm. This chain is Solute-binding protein Dde_0634, found in Oleidesulfovibrio alaskensis (strain ATCC BAA-1058 / DSM 17464 / G20) (Desulfovibrio alaskensis).